The primary structure comprises 237 residues: 7-carboxy-7-deazaguanine synthase (237 aa).

Residues 15–17 and Arg-30 each bind substrate; that span reads LSG. The region spanning 21–233 is the Radical SAM core domain; it reads STGIPTIFVR…IQTHKYIWGD (213 aa). Residues Cys-34, Cys-38, and Cys-48 each contribute to the [4Fe-4S] cluster site. A Mg(2+)-binding site is contributed by Thr-50. Thr-84 is a substrate binding site. Position 86 (Gly-86) interacts with S-adenosyl-L-methionine.

This sequence belongs to the radical SAM superfamily. 7-carboxy-7-deazaguanine synthase family. As to quaternary structure, homodimer. The cofactor is [4Fe-4S] cluster. S-adenosyl-L-methionine serves as cofactor. Mg(2+) is required as a cofactor.

The catalysed reaction is 6-carboxy-5,6,7,8-tetrahydropterin + H(+) = 7-carboxy-7-deazaguanine + NH4(+). The protein operates within purine metabolism; 7-cyano-7-deazaguanine biosynthesis. Functionally, catalyzes the complex heterocyclic radical-mediated conversion of 6-carboxy-5,6,7,8-tetrahydropterin (CPH4) to 7-carboxy-7-deazaguanine (CDG), a step common to the biosynthetic pathways of all 7-deazapurine-containing compounds. This chain is 7-carboxy-7-deazaguanine synthase, found in Leptospira interrogans serogroup Icterohaemorrhagiae serovar Lai (strain 56601).